We begin with the raw amino-acid sequence, 348 residues long: MSAKVGVLLSGGVDSAVALYLLIEKGYEVTAYHMKTVRDELYITKQIKHKVCCSPSDTHDAQLIAKKFGVPFKIIHVEDVFKEKIIDYFISENLAGKTPNPCFFCNDYIKFGFVMDVALSDGMDFVASGHYARILNGKLYRALDKEKDQSYFLASIKKEKLSKILLPNGEYSKETIRDIAERAGIHVAKKIDSQDLCFLPDNDFKSFFEERGVKIEPGNIITSEGKIIGKHEGLPFYTIGQRKLGVAAGQKLYVKAKNVEGNFIVVSPLDEVYQNEMRVKNLNIYVDLPDEFLATVKIRKKFKEVPCRVEYLKDELKVQFLEPVFAVTPGQIAVFYNEDEVLCSGVIE.

ATP is bound by residues 8 to 15 and M34; that span reads LLSGGVDS. C105 serves as the catalytic Nucleophile. C105 and C197 are disulfide-bonded. G129 contributes to the ATP binding site. An interaction with tRNA region spans residues 147 to 149; the sequence is KDQ. The active-site Cysteine persulfide intermediate is C197.

This sequence belongs to the MnmA/TRMU family.

It is found in the cytoplasm. It carries out the reaction S-sulfanyl-L-cysteinyl-[protein] + uridine(34) in tRNA + AH2 + ATP = 2-thiouridine(34) in tRNA + L-cysteinyl-[protein] + A + AMP + diphosphate + H(+). Catalyzes the 2-thiolation of uridine at the wobble position (U34) of tRNA, leading to the formation of s(2)U34. In Fervidobacterium nodosum (strain ATCC 35602 / DSM 5306 / Rt17-B1), this protein is tRNA-specific 2-thiouridylase MnmA.